Consider the following 258-residue polypeptide: tRNA pseudouridine synthase A (258 aa).

The active-site Nucleophile is the aspartate 52. Tyrosine 110 is a binding site for substrate.

This sequence belongs to the tRNA pseudouridine synthase TruA family. Homodimer.

The enzyme catalyses uridine(38/39/40) in tRNA = pseudouridine(38/39/40) in tRNA. Formation of pseudouridine at positions 38, 39 and 40 in the anticodon stem and loop of transfer RNAs. This chain is tRNA pseudouridine synthase A, found in Francisella tularensis subsp. tularensis (strain FSC 198).